The primary structure comprises 449 residues: MREILHIQGGQCGNQIGAKFWEVVCAEHGIDSTGRYQGENDLQLERVNVYYNEASCGRFVPRAVLMDLEPGTMDSVRSGPYGQIFRPDNFVFGQSGAGNNWAKGHYTEGAELIDSVLDVVRKEAENCDCLQGFQVCHSLGGGTGSGMGTLLISKIREEYPDRMMLTFSVFPSPKVSDTVVEPYNATLSVHQLVENADECMVLDNEALYDICFRTLKLTTPSFGDLNHLISATMSGVTCCLRFPGQLNSDLRKLAVNLIPFPRLHFFMVGFAPLTSRGSQQYRALTVPELTQQMWDAKNMMCAADPRHGRYLTASAMFRGKMSTKEVDEQMINVQNKNSSYFVEWIPNNVKSTVCDIPPTGLKMASTFIGNSTSIQEMFRRVSEQFTAMFRRKAFLHWYTGEGMDEMEFTEAESNMNDLVSEYQQYQDATADEEEGYEYEEDEVEVQEEQ.

GTP is bound by residues glutamine 11, glutamate 69, serine 138, glycine 142, threonine 143, glycine 144, asparagine 204, and asparagine 226. Glutamate 69 contributes to the Mg(2+) binding site. Residues 428-449 (ATADEEEGYEYEEDEVEVQEEQ) are disordered. Residues 429–449 (TADEEEGYEYEEDEVEVQEEQ) are compositionally biased toward acidic residues.

Belongs to the tubulin family. In terms of assembly, dimer of alpha and beta chains. A typical microtubule is a hollow water-filled tube with an outer diameter of 25 nm and an inner diameter of 15 nM. Alpha-beta heterodimers associate head-to-tail to form protofilaments running lengthwise along the microtubule wall with the beta-tubulin subunit facing the microtubule plus end conferring a structural polarity. Microtubules usually have 13 protofilaments but different protofilament numbers can be found in some organisms and specialized cells. It depends on Mg(2+) as a cofactor.

The protein localises to the cytoplasm. It localises to the cytoskeleton. Tubulin is the major constituent of microtubules, a cylinder consisting of laterally associated linear protofilaments composed of alpha- and beta-tubulin heterodimers. Microtubules grow by the addition of GTP-tubulin dimers to the microtubule end, where a stabilizing cap forms. Below the cap, tubulin dimers are in GDP-bound state, owing to GTPase activity of alpha-tubulin. The protein is Tubulin beta-8 chain (TUBB8) of Arabidopsis thaliana (Mouse-ear cress).